Consider the following 157-residue polypeptide: Regenerating islet-derived protein 4 (157 aa).

A signal peptide spans 1 to 22 (MASKCVRLLLLLSWVAGPEVLS). Cys-29 and Cys-40 are oxidised to a cystine. The 119-residue stretch at 36 to 154 (YRSHCYGYFR…CTKRQHFLCK (119 aa)) folds into the C-type lectin domain. N-linked (GlcNAc...) asparagine glycosylation is found at Asn-49, Asn-62, and Asn-101. 2 disulfides stabilise this stretch: Cys-57-Cys-153 and Cys-128-Cys-145. A carbohydrate contacts are provided by residues 97-101 (DPQKN) and 134-136 (KDK).

The protein localises to the secreted. Functionally, calcium-independent lectin displaying mannose-binding specificity and able to maintain carbohydrate recognition activity in an acidic environment. May be involved in inflammatory and metaplastic responses of the gastrointestinal epithelium. The protein is Regenerating islet-derived protein 4 (Reg4) of Rattus norvegicus (Rat).